The following is a 355-amino-acid chain: MRKILVTGGAGFIGSAVVRHIIRNTRDAVVNVDKLTYAGNLESLTEVADNPRYAFEQVDICDRAELDRVFAQYRPDAVMHLAAESHVDRSIGSAGEFIQTNIVGTFNLLEAARAYWQQMPSEQHEAFRFHHISTDEVYGDLGGTDDLFTETAPYAPSSPYSASKASSDHLVRAWLRTYGLPTIVTNCSNNYGPYHFPEKLIPLMILNALDGKPLPVYGDGMQIRDWLFVEDHARALYQVVTEGVVGETYNIGGHNEKANIEVVKTICALLEELAPEKPAGVARYEDLITFVQDRPGHDVRYAVDAAKIRRDLGWLPLETFESGLRKTVQWYLDNKTWWQNVLNGSYRLERLGTGK.

Residues 12–13 (FI), 33–36 (DKLT), 59–60 (DI), 81–85 (LAAES), and Thr100 each bind NAD(+). Ser85 contributes to the substrate binding site. Position 134 (Thr134) interacts with substrate. Residue Asp135 is the Proton donor of the active site. Catalysis depends on proton acceptor residues Glu136 and Tyr160. An NAD(+)-binding site is contributed by 160–164 (YSASK). Position 189 (Asn189) interacts with substrate. Asn190 provides a ligand contact to NAD(+). Substrate-binding positions include 199 to 200 (KL), 215 to 217 (PVY), Arg224, Asn259, and 293 to 297 (DRPGH).

This sequence belongs to the NAD(P)-dependent epimerase/dehydratase family. dTDP-glucose dehydratase subfamily. As to quaternary structure, homodimer. NAD(+) is required as a cofactor.

It carries out the reaction dTDP-alpha-D-glucose = dTDP-4-dehydro-6-deoxy-alpha-D-glucose + H2O. Its pathway is carbohydrate biosynthesis; dTDP-L-rhamnose biosynthesis. It functions in the pathway bacterial outer membrane biogenesis; LPS O-antigen biosynthesis. Its function is as follows. Catalyzes the dehydration of dTDP-D-glucose to form dTDP-6-deoxy-D-xylo-4-hexulose via a three-step process involving oxidation, dehydration and reduction. This Neisseria meningitidis serogroup B (strain ATCC BAA-335 / MC58) protein is dTDP-glucose 4,6-dehydratase (rfbB1).